The sequence spans 559 residues: Mercuric reductase (559 aa).

One can recognise an HMA domain in the interval 1-64; it reads MYLNITGMTC…AVAGLGYKAT (64 aa). A metal cation-binding residues include cysteine 10 and cysteine 13. Alanine 108, glycine 128, and threonine 133 together coordinate FAD. A disulfide bond links cysteine 134 and cysteine 139. Lysine 143, alanine 209, aspartate 401, and valine 409 together coordinate FAD. Residues cysteine 556 and cysteine 557 each coordinate Hg(2+).

This sequence belongs to the class-I pyridine nucleotide-disulfide oxidoreductase family. In terms of assembly, homodimer. It depends on FAD as a cofactor.

The enzyme catalyses Hg + NADP(+) + H(+) = Hg(2+) + NADPH. Functionally, resistance to Hg(2+) in bacteria appears to be governed by a specialized system which includes mercuric reductase. MerA protein is responsible for volatilizing mercury as Hg(0). This Alcaligenes sp protein is Mercuric reductase (merA).